Consider the following 172-residue polypeptide: NADH dehydrogenase [ubiquinone] 1 alpha subcomplex subunit 8 (172 aa).

2 CHCH domains span residues 33–74 (GAQC…FRQI) and 75–118 (KRHC…LGWV). Short sequence motifs (cx9C motif) lie at residues 36–46 (CDKPNKEFMLC), 56–66 (CLEEGKLVNQC), 78–88 (CAEPFTEYWTC), and 100–110 (CRKQQAQFDEC). Intrachain disulfides connect Cys36/Cys66, Cys46/Cys56, Cys78/Cys110, and Cys88/Cys100. Residues 133–159 (TDRPLPENPYHSRARPEPNPEVEGDLK) form a disordered region. Positions 146 to 159 (ARPEPNPEVEGDLK) are enriched in basic and acidic residues.

It belongs to the complex I NDUFA8 subunit family. As to quaternary structure, complex I is composed of 45 different subunits.

Its subcellular location is the mitochondrion inner membrane. The protein resides in the mitochondrion intermembrane space. It is found in the mitochondrion. In terms of biological role, accessory subunit of the mitochondrial membrane respiratory chain NADH dehydrogenase (Complex I), that is believed not to be involved in catalysis. Complex I functions in the transfer of electrons from NADH to the respiratory chain. The immediate electron acceptor for the enzyme is believed to be ubiquinone. The sequence is that of NADH dehydrogenase [ubiquinone] 1 alpha subcomplex subunit 8 (NDUFA8) from Bos taurus (Bovine).